Consider the following 73-residue polypeptide: MRTIISLLLLSAMVFAEIEAISLEEGLQLFEGERGCVGENQQCANWAGPHCCSGYYCTCRYFPKCICRKDSGK.

Residues 1–20 form the signal peptide; the sequence is MRTIISLLLLSAMVFAEIEA. Residues 21–34 constitute a propeptide that is removed on maturation; that stretch reads ISLEEGLQLFEGER. Intrachain disulfides connect Cys36-Cys52, Cys43-Cys57, Cys51-Cys67, and Cys59-Cys65. Ser71 is subject to Serine amide.

The protein belongs to the neurotoxin 07 (Beta/delta-agtx) family. 03 (aga-4) subfamily. Aga sub-subfamily. Expressed by the venom gland.

The protein resides in the secreted. Its function is as follows. Insecticidal neurotoxin that induces an irreversible spastic paralysis when injected into insects. Modifies presynaptic voltage-gated sodium channels (Nav), causing them to open at the normal resting potential of the nerve. This leads to spontaneous release of neurotransmitter and repetitive action potentials in motor neurons. The sequence is that of U3-agatoxin-Ao1i from Agelena orientalis (Funnel-web spider).